We begin with the raw amino-acid sequence, 289 residues long: Digeranylgeranylglyceryl phosphate synthase (289 aa).

8 consecutive transmembrane segments (helical) span residues 17–37, 50–70, 106–126, 141–161, 163–183, 221–241, 243–263, and 269–289; these read CLMA…ILTS, LFSS…GNAI, FALG…IALF, TPLL…LFGA, VFGL…ALAI, LIGF…MLGL, YLYL…QLLA, and KSSK…IAGV.

The protein belongs to the UbiA prenyltransferase family. DGGGP synthase subfamily. The cofactor is Mg(2+).

The protein localises to the cell membrane. It carries out the reaction sn-3-O-(geranylgeranyl)glycerol 1-phosphate + (2E,6E,10E)-geranylgeranyl diphosphate = 2,3-bis-O-(geranylgeranyl)-sn-glycerol 1-phosphate + diphosphate. It participates in membrane lipid metabolism; glycerophospholipid metabolism. Prenyltransferase that catalyzes the transfer of the geranylgeranyl moiety of geranylgeranyl diphosphate (GGPP) to the C2 hydroxyl of (S)-3-O-geranylgeranylglyceryl phosphate (GGGP). This reaction is the second ether-bond-formation step in the biosynthesis of archaeal membrane lipids. The chain is Digeranylgeranylglyceryl phosphate synthase from Methanosarcina barkeri (strain Fusaro / DSM 804).